The sequence spans 450 residues: MGRRLFGTDGLRGQVNIYPMTADMALRLGLAAGTRFRNGNRRHRVVIGKDTRLSGYMFESALTAGLCAAGMDVFQVGPLPTPAISFLTRNMRADLGVVISASHNPFMDNGIKFFDRSGFKLPDDVENQMTDMVLDPDWQWDYPASEKVGRAYKIADAPGRYIVYIKSSFPADLTLDGLRVVIDCANGANYKVAPLALEELGAEVIKLGTEPNGLNINHQCGSLYPEVVAAKVRETRADIGLALDGDADRLIVVDEKGTILDGDQIMALCAQDLMAKGKLPGNMLVATVMSNMALEVFMKEHGGTLLRTAVGDRYVVEAMRQHGALLGGEQSGHLIFREYSTTGDGLLAALQILRIMRERGKPLSELAGQLQLFPQQLINVHVERKIPFAECQPVADAVAAIETELGDRGRVLLRYSGTESVCRVMVEGEHPEQVARLAEMLAETVQKHLR.

Ser102 (phosphoserine intermediate) is an active-site residue. Mg(2+) contacts are provided by Ser102, Asp244, Asp246, and Asp248. Ser102 carries the post-translational modification Phosphoserine.

Belongs to the phosphohexose mutase family. Mg(2+) is required as a cofactor. Activated by phosphorylation.

It catalyses the reaction alpha-D-glucosamine 1-phosphate = D-glucosamine 6-phosphate. Catalyzes the conversion of glucosamine-6-phosphate to glucosamine-1-phosphate. The sequence is that of Phosphoglucosamine mutase from Nitratidesulfovibrio vulgaris (strain ATCC 29579 / DSM 644 / CCUG 34227 / NCIMB 8303 / VKM B-1760 / Hildenborough) (Desulfovibrio vulgaris).